A 207-amino-acid chain; its full sequence is Large ribosomal subunit protein uL4 (207 aa).

The tract at residues 49–78 is disordered; that stretch reads HAVKNRSAVSGGGRKPWRQKGTGRARQGSI.

It belongs to the universal ribosomal protein uL4 family. Part of the 50S ribosomal subunit.

Its function is as follows. One of the primary rRNA binding proteins, this protein initially binds near the 5'-end of the 23S rRNA. It is important during the early stages of 50S assembly. It makes multiple contacts with different domains of the 23S rRNA in the assembled 50S subunit and ribosome. Forms part of the polypeptide exit tunnel. This Streptococcus pyogenes serotype M49 (strain NZ131) protein is Large ribosomal subunit protein uL4.